The following is a 394-amino-acid chain: Chalcone synthase 2 (394 aa).

Cys-167 is a catalytic residue.

This sequence belongs to the thiolase-like superfamily. Chalcone/stilbene synthases family.

It carries out the reaction (E)-4-coumaroyl-CoA + 3 malonyl-CoA + 3 H(+) = 2',4,4',6'-tetrahydroxychalcone + 3 CO2 + 4 CoA. It functions in the pathway secondary metabolite biosynthesis; flavonoid biosynthesis. Its function is as follows. The primary product of this enzyme is 4,2',4',6'-tetrahydroxychalcone (also termed naringenin-chalcone or chalcone) which can under specific conditions spontaneously isomerize into naringenin. The sequence is that of Chalcone synthase 2 (CHS2) from Secale cereale (Rye).